The sequence spans 137 residues: NADH-quinone oxidoreductase subunit A (137 aa).

3 consecutive transmembrane segments (helical) span residues 12-32 (WGFAIFLLGVVGLCAFMLGLS), 66-86 (FYLVAMLFVIFDIEALFLFAW), and 95-115 (WTGFVEALVFIAILLAGLVYL).

It belongs to the complex I subunit 3 family. As to quaternary structure, NDH-1 is composed of 13 different subunits. Subunits NuoA, H, J, K, L, M, N constitute the membrane sector of the complex.

It localises to the cell inner membrane. It carries out the reaction a quinone + NADH + 5 H(+)(in) = a quinol + NAD(+) + 4 H(+)(out). Functionally, NDH-1 shuttles electrons from NADH, via FMN and iron-sulfur (Fe-S) centers, to quinones in the respiratory chain. The immediate electron acceptor for the enzyme in this species is believed to be ubiquinone. Couples the redox reaction to proton translocation (for every two electrons transferred, four hydrogen ions are translocated across the cytoplasmic membrane), and thus conserves the redox energy in a proton gradient. The protein is NADH-quinone oxidoreductase subunit A of Pseudomonas savastanoi pv. phaseolicola (strain 1448A / Race 6) (Pseudomonas syringae pv. phaseolicola (strain 1448A / Race 6)).